A 278-amino-acid chain; its full sequence is Alpha-tocopherol transfer protein (278 aa).

The CRAL-TRIO domain occupies 88–253 (RPRSILGLLK…EYGGKEFSME (166 aa)). Asp185 is an a 1,2-diacyl-sn-glycero-3-phospho-(1D-myo-inositol-3,4-bisphosphate) binding site. Phe187 is a (+)-alpha-tocopherol binding site. 190–192 (KVR) contributes to the a 1,2-diacyl-sn-glycero-3-phospho-(1D-myo-inositol-3,4-bisphosphate) binding site. 208 to 211 (SMIK) is an a 1,2-diacyl-sn-glycero-3-phospho-(1D-myo-inositol-4,5-bisphosphate) binding site. A 1,2-diacyl-sn-glycero-3-phospho-(1D-myo-inositol-3,4-bisphosphate) is bound by residues Lys217 and Arg221.

In terms of assembly, monomer and homotetramer. Phosphatidylinositol 4,5-bisphosphate binding induces the formation of homotetramers. Phosphatidylinositol 3,4-bisphosphate is less efficient in inducing tetramerization.

It is found in the cytoplasm. Binds (+)-alpha-tocopherol, enhances its transfer between separate membranes, and stimulates its release from liver cells. Binds both phosphatidylinositol 3,4-bisphosphate and phosphatidylinositol 4,5-bisphosphate; the resulting conformation change is important for the release of the bound alpha-tocopherol. The sequence is that of Alpha-tocopherol transfer protein (Ttpa) from Mus musculus (Mouse).